A 206-amino-acid chain; its full sequence is Protein GET1 (206 aa).

The Lumenal portion of the chain corresponds to 1–4; sequence MPSL. A helical transmembrane segment spans residues 5–24; it reads LITILLLNIVIYVINTIGAA. The Cytoplasmic segment spans residues 25 to 110; sequence TIDSLLWLFY…SFDMTVKSVR (86 aa). A coiled-coil region spans residues 42–99; the sequence is SHMAREQRRLKREVIQLKREMNATSSQDEFAKWAKLRRRHDKALETYEAKNNELTQCK. The helical transmembrane segment at 111-131 threads the bilayer; sequence WAATSGLMLFLQFWYSKRPIF. The Lumenal segment spans residues 132 to 155; sequence TLPPGWIPWQVQWVLSFPRAPMGT. The helical transmembrane segment at 156 to 172 threads the bilayer; the sequence is VSIQIWGGACATVVALV. Residues 173–206 lie on the Cytoplasmic side of the membrane; the sequence is GDAVGATMGFVSASKKEGMKVGAGVGEKEGKKSQ.

Belongs to the WRB/GET1 family. Interacts with GET3.

It is found in the endoplasmic reticulum membrane. Functionally, required for the post-translational delivery of tail-anchored (TA) proteins to the endoplasmic reticulum. Acts as a membrane receptor for soluble GET3, which recognizes and selectively binds the transmembrane domain of TA proteins in the cytosol. In Ajellomyces dermatitidis (strain ER-3 / ATCC MYA-2586) (Blastomyces dermatitidis), this protein is Protein GET1.